A 62-amino-acid polypeptide reads, in one-letter code: Large ribosomal subunit protein bL28 (62 aa).

This sequence belongs to the bacterial ribosomal protein bL28 family.

The chain is Large ribosomal subunit protein bL28 from Helicobacter hepaticus (strain ATCC 51449 / 3B1).